Reading from the N-terminus, the 700-residue chain is Elongation factor G 2 (700 aa).

The region spanning 8-290 is the tr-type G domain; the sequence is ERYRNIGISA…AVIDFLPSPV (283 aa). GTP is bound by residues 17 to 24, 88 to 92, and 142 to 145; these read AHIDAGKT, DTPGH, and NKMD.

The protein belongs to the TRAFAC class translation factor GTPase superfamily. Classic translation factor GTPase family. EF-G/EF-2 subfamily.

It localises to the cytoplasm. Catalyzes the GTP-dependent ribosomal translocation step during translation elongation. During this step, the ribosome changes from the pre-translocational (PRE) to the post-translocational (POST) state as the newly formed A-site-bound peptidyl-tRNA and P-site-bound deacylated tRNA move to the P and E sites, respectively. Catalyzes the coordinated movement of the two tRNA molecules, the mRNA and conformational changes in the ribosome. The protein is Elongation factor G 2 of Burkholderia orbicola (strain AU 1054).